The following is a 300-amino-acid chain: Free fatty acid receptor 1 (300 aa).

Over 1-8 (MDLPPQLS) the chain is Extracellular. Residues 9 to 31 (FALYVAAFALGFPLNVLAIRGAR) form a helical membrane-spanning segment. The Cytoplasmic segment spans residues 32–41 (AHARRRLTPS). Residues 42 to 64 (LVYALNLGCSDLLLTVSLPLKAV) form a helical membrane-spanning segment. Residues 65 to 79 (EALASGAWPLPASLC) lie on the Extracellular side of the membrane. A disulfide bridge connects residues Cys-79 and Cys-170. Residues 80–101 (PVFGVAHFAPLYAGGGFLAALS) form a helical membrane-spanning segment. At 102 to 121 (AGRYLGAAFPLGYQAFRRPC) the chain is on the cytoplasmic side. Residues 122–142 (YSWGVCAAIWALVLCHLGLVF) form a helical membrane-spanning segment. Residues 143–178 (VLEAPGGWLDHSNTSLGINTPVNGSPVCLEAWDPAS) lie on the Extracellular side of the membrane. N-linked (GlcNAc...) asparagine glycosylation occurs at Asn-155. A helical membrane pass occupies residues 179–200 (AGPARFSLSLLLFFLPLAITAF). The Cytoplasmic segment spans residues 201-223 (CYVGCLRALAHSGLTHRRKLRAA). The helical transmembrane segment at 224–248 (WVAGGALLTLLLCVGPYNASNVASF) threads the bilayer. Over 249-256 (LNPNLGGS) the chain is Extracellular. A helical membrane pass occupies residues 257–279 (WRKLGLITGAWSVVLNPLVTGYL). Residues 280–300 (GRGPGLKTVCAARTQGSTSQK) lie on the Cytoplasmic side of the membrane.

This sequence belongs to the G-protein coupled receptor 1 family.

The protein resides in the cell membrane. Functionally, G-protein coupled receptor for medium and long chain saturated and unsaturated fatty acids that plays an important role in glucose homeostasis. Fatty acid binding increases glucose-stimulated insulin secretion, and may also enhance the secretion of glucagon-like peptide 1 (GLP-1). May also play a role in bone homeostasis; receptor signaling activates pathways that inhibit osteoclast differentiation. Ligand binding leads to a conformation change that triggers signaling via G-proteins that activate phospholipase C, leading to an increase of the intracellular calcium concentration. Seems to act through a G(q) and G(i)-mediated pathway. Mediates the anti-inflammatory effects of omega-3 polyunsaturated fatty acids (PUFAs) via inhibition of NLRP3 inflammasome activation. This is Free fatty acid receptor 1 (FFAR1) from Macaca fascicularis (Crab-eating macaque).